A 688-amino-acid polypeptide reads, in one-letter code: MATKRLARRLGLIRRKSVTPASGNPGGSRLKQLYAYLIVVDFESTCWNDGKHHSSPEIIEFPAVLLNTATGEIESEFHAYVQPQEHPILSEFCTELTGIKQVQVDEGVPLKICLSQFCKWIHKLQQQQTISFAAGDSEPSTSEVKLCAFVTWSDWDLGVCLEYECRRKQLLKPVFLNSWIDLRATYRLFYKRKPKGLSGALQEVGIEFSGREHSGLDDSRNTALLAWKMIRDGCLMKITRSLNKVLTKKNPKILARNLGTDQVEEAATCNMSIQGPSIYQKELQSTVNAEENAQMNSVCVNSSCIKGQLQPKSNMKADLYNIRHSFPLFTTKSSTSVDQLHSPTLNPPLTMQKPSKSDQLALNDSSKSSTLNSNLVLVSTTIPSVNHVSDVEMGHTFDCLPMLAEWEDVVLLPASQAEPDTDCMPPVSDTNVSTSLNSAERSLVPEEPETLSYENFEDLQETPQNSETSKSIVYKSPHSTVYDVKGAKHPGSDASAFKLPKCKPFPFTSVHASAAYPSVLRKDPLLSGGTKRNSLSPPASPRTKRQTFTIHEEKPTSSICSPGTTSCRVSPSVLTSTVNLQEPWKTGKMTPPLCKCGRRSKRLIVSNNGPNHGKAFYCCPVGKYQQDRKCCGYFKWEQTLQKERTNGKALSHSSEGLTFSSPETSRIHDRNLSFPIKNSLRLRPSMRH.

The 190-residue stretch at 37–226 (LIVVDFESTC…DDSRNTALLA (190 aa)) folds into the Exonuclease domain. 3 residues coordinate Mg(2+): Asp-41, Glu-43, and Asp-156. The active-site Proton acceptor is Glu-43. AMP is bound at residue Glu-43. His-213 acts as the Proton acceptor in catalysis. An AMP-binding site is contributed by His-213. Asp-218 is a Mg(2+) binding site. Over residues 337-360 (VDQLHSPTLNPPLTMQKPSKSDQL) the composition is skewed to polar residues. 2 disordered regions span residues 337-367 (VDQL…DSSK) and 523-546 (DPLL…TKRQ). Zn(2+) is bound by residues Cys-594, Cys-596, Cys-619, and Cys-631. Residues 594-640 (CKCGRRSKRLIVSNNGPNHGKAFYCCPVGKYQQDRKCCGYFKWEQTL) form a GRF-type zinc finger.

This sequence belongs to the ERI2 family. Mg(2+) is required as a cofactor.

This Mus musculus (Mouse) protein is ERI1 exoribonuclease 2 (Eri2).